An 857-amino-acid chain; its full sequence is DNA mismatch repair protein MutS (857 aa).

Position 603–610 (Gly603–Ser610) interacts with ATP.

This sequence belongs to the DNA mismatch repair MutS family.

Functionally, this protein is involved in the repair of mismatches in DNA. It is possible that it carries out the mismatch recognition step. This protein has a weak ATPase activity. This Methanothrix thermoacetophila (strain DSM 6194 / JCM 14653 / NBRC 101360 / PT) (Methanosaeta thermophila) protein is DNA mismatch repair protein MutS.